A 524-amino-acid chain; its full sequence is D-3-phosphoglycerate dehydrogenase (524 aa).

NAD(+) contacts are provided by residues 149-150 (RI), aspartate 169, 229-231 (CAR), and aspartate 255. Residue arginine 231 is part of the active site. Residue glutamate 260 is part of the active site. Residue histidine 278 is the Proton donor of the active site. An NAD(+)-binding site is contributed by 278–281 (HQGA). The ACT domain maps to 452-524 (LAIIKHIDRP…NIKDVAVINL (73 aa)).

This sequence belongs to the D-isomer specific 2-hydroxyacid dehydrogenase family.

It catalyses the reaction (2R)-3-phosphoglycerate + NAD(+) = 3-phosphooxypyruvate + NADH + H(+). Its pathway is amino-acid biosynthesis; L-serine biosynthesis; L-serine from 3-phospho-D-glycerate: step 1/3. The sequence is that of D-3-phosphoglycerate dehydrogenase (serA) from Methanocaldococcus jannaschii (strain ATCC 43067 / DSM 2661 / JAL-1 / JCM 10045 / NBRC 100440) (Methanococcus jannaschii).